The chain runs to 295 residues: Tissue factor (295 aa).

A signal peptide spans 1 to 32 (METPAWPRVPRPETAVARTLLLGWVFAQVAGA). Residues 33-251 (SGTTNTVAAY…MGQEKGEFRE (219 aa)) are Extracellular-facing. 2 short sequence motifs (WKS motif) span residues 46-48 (WKS) and 77-79 (WKS). A disulfide bridge connects residues C81 and C89. Residues N156 and N169 are each glycosylated (N-linked (GlcNAc...) asparagine). A WKS motif motif is present at residues 190-192 (WKS). C218 and C241 form a disulfide bridge. A helical transmembrane segment spans residues 252-274 (IFYIIGAVVFVVIILVIILAISL). Residues 275-295 (HKCRKAGVGQSWKENSPLNVS) lie on the Cytoplasmic side of the membrane. C277 is lipidated: S-palmitoyl cysteine.

It belongs to the tissue factor family. As to quaternary structure, interacts with HSPE; the interaction, inhibited by heparin, promotes the generation of activated factor X and activates coagulation in the presence of activated factor VII. Lung, placenta and pancreas.

The protein resides in the membrane. It localises to the secreted. Its function is as follows. Initiates blood coagulation by forming a complex with circulating factor VII or VIIa. The [TF:VIIa] complex activates factors IX or X by specific limited proteolysis. TF plays a role in normal hemostasis by initiating the cell-surface assembly and propagation of the coagulation protease cascade. This is Tissue factor (F3) from Homo sapiens (Human).